Reading from the N-terminus, the 310-residue chain is tRNA dimethylallyltransferase (310 aa).

13–20 contacts ATP; that stretch reads GPTASGKT. 15–20 lines the substrate pocket; it reads TASGKT. Interaction with substrate tRNA stretches follow at residues 38 to 41, 162 to 166, 243 to 248, and 276 to 283; these read DSAL, QRLSR, RCVGYR, and KRQITWLR.

Belongs to the IPP transferase family. As to quaternary structure, monomer. It depends on Mg(2+) as a cofactor.

The enzyme catalyses adenosine(37) in tRNA + dimethylallyl diphosphate = N(6)-dimethylallyladenosine(37) in tRNA + diphosphate. Functionally, catalyzes the transfer of a dimethylallyl group onto the adenine at position 37 in tRNAs that read codons beginning with uridine, leading to the formation of N6-(dimethylallyl)adenosine (i(6)A). The chain is tRNA dimethylallyltransferase from Vibrio parahaemolyticus serotype O3:K6 (strain RIMD 2210633).